The chain runs to 260 residues: Ribosomal RNA small subunit methyltransferase J (260 aa).

S-adenosyl-L-methionine is bound by residues 125–126 (ER) and aspartate 179.

This sequence belongs to the methyltransferase superfamily. RsmJ family.

It is found in the cytoplasm. It catalyses the reaction guanosine(1516) in 16S rRNA + S-adenosyl-L-methionine = N(2)-methylguanosine(1516) in 16S rRNA + S-adenosyl-L-homocysteine + H(+). Functionally, specifically methylates the guanosine in position 1516 of 16S rRNA. The protein is Ribosomal RNA small subunit methyltransferase J of Pseudomonas fluorescens (strain Pf0-1).